The following is a 191-amino-acid chain: Protein GrpE (191 aa).

Composition is skewed to basic and acidic residues over residues 1–19 and 29–45; these read MKDE…EPES and QQGE…GEIK. The segment at 1–45 is disordered; the sequence is MKDEHNQEHDHLSPKEPESYQKAYACKEQQGEEKQEASEKEGEIK.

The protein belongs to the GrpE family. As to quaternary structure, homodimer.

The protein resides in the cytoplasm. In terms of biological role, participates actively in the response to hyperosmotic and heat shock by preventing the aggregation of stress-denatured proteins, in association with DnaK and GrpE. It is the nucleotide exchange factor for DnaK and may function as a thermosensor. Unfolded proteins bind initially to DnaJ; upon interaction with the DnaJ-bound protein, DnaK hydrolyzes its bound ATP, resulting in the formation of a stable complex. GrpE releases ADP from DnaK; ATP binding to DnaK triggers the release of the substrate protein, thus completing the reaction cycle. Several rounds of ATP-dependent interactions between DnaJ, DnaK and GrpE are required for fully efficient folding. In Helicobacter pylori (strain J99 / ATCC 700824) (Campylobacter pylori J99), this protein is Protein GrpE.